A 167-amino-acid chain; its full sequence is Leptin (167 aa).

An N-terminal signal peptide occupies residues 1–21 (MCWRPLCRFLWLWSYLSYVQA). Cys117 and Cys167 are disulfide-bonded.

The protein belongs to the leptin family.

It localises to the secreted. Functionally, key player in the regulation of energy balance and body weight control. Once released into the circulation, has central and peripheral effects by binding LEPR, found in many tissues, which results in the activation of several major signaling pathways. In the hypothalamus, acts as an appetite-regulating factor that induces a decrease in food intake and an increase in energy consumption by inducing anorexinogenic factors and suppressing orexigenic neuropeptides, also regulates bone mass and secretion of hypothalamo-pituitary-adrenal hormones. In the periphery, increases basal metabolism, influences reproductive function, regulates pancreatic beta-cell function and insulin secretion, is pro-angiogenic for endothelial cell and affects innate and adaptive immunity. In the arcuate nucleus of the hypothalamus, activates by depolarization POMC neurons inducing FOS and SOCS3 expression to release anorexigenic peptides and inhibits by hyperpolarization NPY neurons inducing SOCS3 with a consequent reduction on release of orexigenic peptides. In addition to its known satiety inducing effect, has a modulatory role in nutrient absorption. In the intestine, reduces glucose absorption by enterocytes by activating PKC and leading to a sequential activation of p38, PI3K and ERK signaling pathways which exerts an inhibitory effect on glucose absorption. Acts as a growth factor on certain tissues, through the activation of different signaling pathways increases expression of genes involved in cell cycle regulation such as CCND1, via JAK2-STAT3 pathway, or VEGFA, via MAPK1/3 and PI3K-AKT1 pathways. May also play an apoptotic role via JAK2-STAT3 pathway and up-regulation of BIRC5 expression. Pro-angiogenic, has mitogenic activity on vascular endothelial cells and plays a role in matrix remodeling by regulating the expression of matrix metalloproteinases (MMPs) and tissue inhibitors of metalloproteinases (TIMPs). In innate immunity, modulates the activity and function of neutrophils by increasing chemotaxis and the secretion of oxygen radicals. Increases phagocytosis by macrophages and enhances secretion of pro-inflammatory mediators. Increases cytotoxic ability of NK cells. Plays a pro-inflammatory role, in synergy with IL1B, by inducing NOS2 which promotes the production of IL6, IL8 and Prostaglandin E2, through a signaling pathway that involves JAK2, PI3K, MAP2K1/MEK1 and MAPK14/p38. In adaptive immunity, promotes the switch of memory T-cells towards T helper-1 cell immune responses. Increases CD4(+)CD25(-) T-cell proliferation and reduces autophagy during TCR (T-cell receptor) stimulation, through MTOR signaling pathway activation and BCL2 up-regulation. The protein is Leptin (Lep) of Rattus norvegicus (Rat).